Consider the following 501-residue polypeptide: Spore development regulator VOSA (501 aa).

3 disordered regions span residues 26–55 (GQFG…GQEP), 67–88 (PQRA…IDPP), and 228–274 (AMTT…DTRG). Residues 35–50 (PPQAETQMSAQASAQA) are compositionally biased toward polar residues. Residues 52-223 (GQEPEPDYKL…SDQGVRLRVR (172 aa)) form the Velvet domain. 2 stretches are compositionally biased toward basic and acidic residues: residues 67–85 (PQRA…RKPI) and 237–252 (QHAE…DRKQ). Positions 253 to 271 (TSAVSRHSSINENDSTPTD) are enriched in polar residues. Positions 364-371 (MSSHHGYT) match the Nuclear localization signal motif. Disordered stretches follow at residues 378 to 455 (FAPH…QQTP) and 474 to 501 (PGQL…EPGA).

Belongs to the velvet family. VosA subfamily. Forms a heterodimeric complex with VELB; the formation of the VELB-VOSA complex is light-dependent.

The protein localises to the nucleus. Its function is as follows. Component of the VELB-VOSA heterodimeric complex that plays a dual role in activating genes associated with spore maturation and repressing certain development-associated genes. The complex binds DNA through the DNA-binding domain of VOSA that recognizes an 11-nucleotide consensus sequence 5'-CTGGCCGCGGC-3' consisting of two motifs in the promoters of key developmental regulatory genes. Appears dispensable for the development and pathogenicity. This chain is Spore development regulator VOSA, found in Pyricularia oryzae (strain 70-15 / ATCC MYA-4617 / FGSC 8958) (Rice blast fungus).